The sequence spans 210 residues: N-(5'-phosphoribosyl)anthranilate isomerase (210 aa).

This sequence belongs to the TrpF family.

It carries out the reaction N-(5-phospho-beta-D-ribosyl)anthranilate = 1-(2-carboxyphenylamino)-1-deoxy-D-ribulose 5-phosphate. The protein operates within amino-acid biosynthesis; L-tryptophan biosynthesis; L-tryptophan from chorismate: step 3/5. The chain is N-(5'-phosphoribosyl)anthranilate isomerase from Nostoc punctiforme (strain ATCC 29133 / PCC 73102).